The sequence spans 343 residues: Aspartate-semialdehyde dehydrogenase (343 aa).

Residue 11-14 coordinates NADP(+); it reads TGMV. R109 serves as a coordination point for phosphate. The active-site Acyl-thioester intermediate is C148. Q174 is a substrate binding site. Position 177-178 (177-178) interacts with NADP(+); that stretch reads SG. E200 lines the substrate pocket. Phosphate is bound at residue K203. Position 233 (R233) interacts with substrate. Residue H240 is the Proton acceptor of the active site. 321–322 contacts NADP(+); that stretch reads NT.

Belongs to the aspartate-semialdehyde dehydrogenase family. Homodimer.

The catalysed reaction is L-aspartate 4-semialdehyde + phosphate + NADP(+) = 4-phospho-L-aspartate + NADPH + H(+). It functions in the pathway amino-acid biosynthesis; L-lysine biosynthesis via DAP pathway; (S)-tetrahydrodipicolinate from L-aspartate: step 2/4. It participates in amino-acid biosynthesis; L-methionine biosynthesis via de novo pathway; L-homoserine from L-aspartate: step 2/3. The protein operates within amino-acid biosynthesis; L-threonine biosynthesis; L-threonine from L-aspartate: step 2/5. Its function is as follows. Catalyzes the NADPH-dependent formation of L-aspartate-semialdehyde (L-ASA) by the reductive dephosphorylation of L-aspartyl-4-phosphate. The sequence is that of Aspartate-semialdehyde dehydrogenase from Archaeoglobus fulgidus (strain ATCC 49558 / DSM 4304 / JCM 9628 / NBRC 100126 / VC-16).